The following is a 218-amino-acid chain: NADH-ubiquinone oxidoreductase 21 kDa subunit, mitochondrial (218 aa).

Residues 1–33 (MSALRITTASAARMLRTSNAMMPSVMGAAQRRA) constitute a mitochondrion transit peptide. The interval 31–74 (RRALSDSAEPARVPSVESARVPEKLAKEDSPLATPKRNSPDYNV) is disordered. A compositionally biased stretch (basic and acidic residues) spans 50 to 60 (RVPEKLAKEDS).

Belongs to the complex I NDUFS4 subunit family. In terms of assembly, complex I is composed of about 40 different subunits. This is a component of the iron-sulfur (IP) fragment of the enzyme.

The protein resides in the mitochondrion inner membrane. Accessory subunit of the mitochondrial membrane respiratory chain NADH dehydrogenase (Complex I), that is believed not to be involved in catalysis. Complex I functions in the transfer of electrons from NADH to the respiratory chain. The immediate electron acceptor for the enzyme is believed to be ubiquinone. The sequence is that of NADH-ubiquinone oxidoreductase 21 kDa subunit, mitochondrial (nuo-21) from Neurospora crassa (strain ATCC 24698 / 74-OR23-1A / CBS 708.71 / DSM 1257 / FGSC 987).